The primary structure comprises 101 residues: Small ribosomal subunit protein uS14 (101 aa).

This sequence belongs to the universal ribosomal protein uS14 family. Part of the 30S ribosomal subunit. Contacts proteins S3 and S10.

In terms of biological role, binds 16S rRNA, required for the assembly of 30S particles and may also be responsible for determining the conformation of the 16S rRNA at the A site. This is Small ribosomal subunit protein uS14 from Pseudomonas syringae pv. tomato (strain ATCC BAA-871 / DC3000).